A 119-amino-acid chain; its full sequence is 5-hydroxyisourate hydrolase (119 aa).

Positions 10, 48, and 116 each coordinate substrate.

It belongs to the transthyretin family. 5-hydroxyisourate hydrolase subfamily. In terms of assembly, homotetramer.

The catalysed reaction is 5-hydroxyisourate + H2O = 5-hydroxy-2-oxo-4-ureido-2,5-dihydro-1H-imidazole-5-carboxylate + H(+). It functions in the pathway purine metabolism; urate degradation; (S)-allantoin from urate: step 2/3. In terms of biological role, catalyzes the hydrolysis of 5-hydroxyisourate (HIU) to 2-oxo-4-hydroxy-4-carboxy-5-ureidoimidazoline (OHCU). In Deinococcus radiodurans (strain ATCC 13939 / DSM 20539 / JCM 16871 / CCUG 27074 / LMG 4051 / NBRC 15346 / NCIMB 9279 / VKM B-1422 / R1), this protein is 5-hydroxyisourate hydrolase.